Reading from the N-terminus, the 356-residue chain is Histidinol-phosphate aminotransferase 1 (356 aa).

Lys213 carries the post-translational modification N6-(pyridoxal phosphate)lysine.

It belongs to the class-II pyridoxal-phosphate-dependent aminotransferase family. Histidinol-phosphate aminotransferase subfamily. Homodimer. Requires pyridoxal 5'-phosphate as cofactor.

The enzyme catalyses L-histidinol phosphate + 2-oxoglutarate = 3-(imidazol-4-yl)-2-oxopropyl phosphate + L-glutamate. The protein operates within amino-acid biosynthesis; L-histidine biosynthesis; L-histidine from 5-phospho-alpha-D-ribose 1-diphosphate: step 7/9. The chain is Histidinol-phosphate aminotransferase 1 (hisC1) from Bordetella parapertussis (strain 12822 / ATCC BAA-587 / NCTC 13253).